We begin with the raw amino-acid sequence, 209 residues long: Putative tripartite motif-containing protein 61 (209 aa).

The RING-type zinc finger occupies 16-57 (CPICLDYLKDPVTISCGHNFCLSCIIMSWKDLHDSFPCPFCH). The segment at 92–133 (EEKHVCKKHNQVLTFFCQKDLELLCPRCSLSTDHQHHCVWPI) adopts a B box-type zinc-finger fold. Zn(2+) is bound by residues C97, H100, C119, and H125.

The polypeptide is Putative tripartite motif-containing protein 61 (TRIM61) (Homo sapiens (Human)).